Here is a 353-residue protein sequence, read N- to C-terminus: Suppressor of RNA-mediated gene silencing (353 aa).

The protein belongs to the phytoreovirus non-structural protein 10 family.

Suppressor of RNA-mediated gene silencing, also known as post-transcriptional gene silencing (PTGS), a mechanism of plant viral defense that limits the accumulation of viral RNAs. This Rice dwarf virus (isolate Fujian) (RDV) protein is Suppressor of RNA-mediated gene silencing.